Here is a 493-residue protein sequence, read N- to C-terminus: Glutamate--tRNA ligase (493 aa).

A 'HIGH' region motif is present at residues Pro10–Thr20. Residues Lys251–Arg255 carry the 'KMSKS' region motif. Lys254 contributes to the ATP binding site.

Belongs to the class-I aminoacyl-tRNA synthetase family. Glutamate--tRNA ligase type 1 subfamily. As to quaternary structure, monomer.

The protein resides in the cytoplasm. The enzyme catalyses tRNA(Glu) + L-glutamate + ATP = L-glutamyl-tRNA(Glu) + AMP + diphosphate. In terms of biological role, catalyzes the attachment of glutamate to tRNA(Glu) in a two-step reaction: glutamate is first activated by ATP to form Glu-AMP and then transferred to the acceptor end of tRNA(Glu). The protein is Glutamate--tRNA ligase of Pseudomonas putida (strain W619).